The chain runs to 297 residues: Aspartate carbamoyltransferase catalytic subunit (297 aa).

Residues arginine 51 and threonine 52 each contribute to the carbamoyl phosphate site. Residue lysine 79 participates in L-aspartate binding. Carbamoyl phosphate-binding residues include arginine 101, histidine 129, and glutamine 132. L-aspartate-binding residues include arginine 162 and arginine 216. Carbamoyl phosphate is bound by residues glycine 257 and proline 258.

This sequence belongs to the aspartate/ornithine carbamoyltransferase superfamily. ATCase family. In terms of assembly, heterododecamer (2C3:3R2) of six catalytic PyrB chains organized as two trimers (C3), and six regulatory PyrI chains organized as three dimers (R2).

It carries out the reaction carbamoyl phosphate + L-aspartate = N-carbamoyl-L-aspartate + phosphate + H(+). It functions in the pathway pyrimidine metabolism; UMP biosynthesis via de novo pathway; (S)-dihydroorotate from bicarbonate: step 2/3. Functionally, catalyzes the condensation of carbamoyl phosphate and aspartate to form carbamoyl aspartate and inorganic phosphate, the committed step in the de novo pyrimidine nucleotide biosynthesis pathway. The chain is Aspartate carbamoyltransferase catalytic subunit from Myxococcus xanthus (strain DK1622).